A 475-amino-acid polypeptide reads, in one-letter code: Phosphoethanolamine N-methyltransferase 1 (475 aa).

This sequence belongs to the class I-like SAM-binding methyltransferase superfamily.

The enzyme catalyses phosphoethanolamine + S-adenosyl-L-methionine = N-methylethanolamine phosphate + S-adenosyl-L-homocysteine + H(+). It participates in phospholipid metabolism; phosphatidylcholine biosynthesis; phosphocholine from phosphoethanolamine. Its activity is regulated as follows. Feedback inhibition by phosphatidylcholine. Functionally, catalyzes the first step in the synthesis of phosphocholine by converting phosphoethanolamine into phospho-monomethylethanolamine (N-methylethanolamine phosphate). Phosphocholine is a precursor for phosphatidylcholine, a major component in membranes and a precursor itself in the production of glycoconjugates secreted by parasitic nematodes to avoid host immune responses. The sequence is that of Phosphoethanolamine N-methyltransferase 1 from Caenorhabditis elegans.